Reading from the N-terminus, the 325-residue chain is 4-hydroxy-3-methylbut-2-enyl diphosphate reductase (325 aa).

Cysteine 13 is a binding site for [4Fe-4S] cluster. Positions 42 and 76 each coordinate (2E)-4-hydroxy-3-methylbut-2-enyl diphosphate. Dimethylallyl diphosphate contacts are provided by histidine 42 and histidine 76. The isopentenyl diphosphate site is built by histidine 42 and histidine 76. Cysteine 98 is a binding site for [4Fe-4S] cluster. Histidine 126 contacts (2E)-4-hydroxy-3-methylbut-2-enyl diphosphate. Histidine 126 serves as a coordination point for dimethylallyl diphosphate. Residue histidine 126 coordinates isopentenyl diphosphate. Glutamate 128 serves as the catalytic Proton donor. Threonine 169 contacts (2E)-4-hydroxy-3-methylbut-2-enyl diphosphate. A [4Fe-4S] cluster-binding site is contributed by cysteine 230. 4 residues coordinate (2E)-4-hydroxy-3-methylbut-2-enyl diphosphate: serine 258, serine 259, asparagine 260, and serine 306. Positions 258, 259, 260, and 306 each coordinate dimethylallyl diphosphate. Positions 258, 259, 260, and 306 each coordinate isopentenyl diphosphate.

This sequence belongs to the IspH family. Requires [4Fe-4S] cluster as cofactor.

The catalysed reaction is isopentenyl diphosphate + 2 oxidized [2Fe-2S]-[ferredoxin] + H2O = (2E)-4-hydroxy-3-methylbut-2-enyl diphosphate + 2 reduced [2Fe-2S]-[ferredoxin] + 2 H(+). The enzyme catalyses dimethylallyl diphosphate + 2 oxidized [2Fe-2S]-[ferredoxin] + H2O = (2E)-4-hydroxy-3-methylbut-2-enyl diphosphate + 2 reduced [2Fe-2S]-[ferredoxin] + 2 H(+). It participates in isoprenoid biosynthesis; dimethylallyl diphosphate biosynthesis; dimethylallyl diphosphate from (2E)-4-hydroxy-3-methylbutenyl diphosphate: step 1/1. It functions in the pathway isoprenoid biosynthesis; isopentenyl diphosphate biosynthesis via DXP pathway; isopentenyl diphosphate from 1-deoxy-D-xylulose 5-phosphate: step 6/6. Catalyzes the conversion of 1-hydroxy-2-methyl-2-(E)-butenyl 4-diphosphate (HMBPP) into a mixture of isopentenyl diphosphate (IPP) and dimethylallyl diphosphate (DMAPP). Acts in the terminal step of the DOXP/MEP pathway for isoprenoid precursor biosynthesis. This Chlorobium phaeobacteroides (strain BS1) protein is 4-hydroxy-3-methylbut-2-enyl diphosphate reductase.